Here is a 694-residue protein sequence, read N- to C-terminus: Polyphosphate kinase (694 aa).

Asparagine 45 is an ATP binding site. 2 residues coordinate Mg(2+): arginine 367 and arginine 397. Residue histidine 427 is the Phosphohistidine intermediate of the active site. ATP-binding residues include tyrosine 460, arginine 553, and histidine 580.

This sequence belongs to the polyphosphate kinase 1 (PPK1) family. Mg(2+) serves as cofactor. An intermediate of this reaction is the autophosphorylated ppk in which a phosphate is covalently linked to a histidine residue through a N-P bond.

The enzyme catalyses [phosphate](n) + ATP = [phosphate](n+1) + ADP. Catalyzes the reversible transfer of the terminal phosphate of ATP to form a long-chain polyphosphate (polyP). In Campylobacter coli, this protein is Polyphosphate kinase.